A 257-amino-acid chain; its full sequence is Thiazole synthase (257 aa).

Lysine 96 (schiff-base intermediate with DXP) is an active-site residue. Residues glycine 157, 184–185, and 206–207 contribute to the 1-deoxy-D-xylulose 5-phosphate site; these read AG and NT.

It belongs to the ThiG family. As to quaternary structure, homotetramer. Forms heterodimers with either ThiH or ThiS.

The protein localises to the cytoplasm. It catalyses the reaction [ThiS sulfur-carrier protein]-C-terminal-Gly-aminoethanethioate + 2-iminoacetate + 1-deoxy-D-xylulose 5-phosphate = [ThiS sulfur-carrier protein]-C-terminal Gly-Gly + 2-[(2R,5Z)-2-carboxy-4-methylthiazol-5(2H)-ylidene]ethyl phosphate + 2 H2O + H(+). The protein operates within cofactor biosynthesis; thiamine diphosphate biosynthesis. In terms of biological role, catalyzes the rearrangement of 1-deoxy-D-xylulose 5-phosphate (DXP) to produce the thiazole phosphate moiety of thiamine. Sulfur is provided by the thiocarboxylate moiety of the carrier protein ThiS. In vitro, sulfur can be provided by H(2)S. This Rhizobium rhizogenes (strain K84 / ATCC BAA-868) (Agrobacterium radiobacter) protein is Thiazole synthase.